A 407-amino-acid chain; its full sequence is Phosphopentomutase (407 aa).

Mn(2+) contacts are provided by Asp-10, Asp-306, His-311, Asp-347, His-348, and His-359.

Belongs to the phosphopentomutase family. Requires Mn(2+) as cofactor.

It localises to the cytoplasm. The enzyme catalyses 2-deoxy-alpha-D-ribose 1-phosphate = 2-deoxy-D-ribose 5-phosphate. It catalyses the reaction alpha-D-ribose 1-phosphate = D-ribose 5-phosphate. It functions in the pathway carbohydrate degradation; 2-deoxy-D-ribose 1-phosphate degradation; D-glyceraldehyde 3-phosphate and acetaldehyde from 2-deoxy-alpha-D-ribose 1-phosphate: step 1/2. In terms of biological role, isomerase that catalyzes the conversion of deoxy-ribose 1-phosphate (dRib-1-P) and ribose 1-phosphate (Rib-1-P) to deoxy-ribose 5-phosphate (dRib-5-P) and ribose 5-phosphate (Rib-5-P), respectively. In Shigella dysenteriae serotype 1 (strain Sd197), this protein is Phosphopentomutase.